We begin with the raw amino-acid sequence, 225 residues long: Immune-associated nucleotide-binding protein 1 (225 aa).

The AIG1-type G domain occupies 6–214; it reads CPVTNLLLLG…YTENMHRKIK (209 aa). The interval 15–22 is G1; the sequence is GRSENGKS. 15–23 provides a ligand contact to GTP; the sequence is GRSENGKSS. Residues 42-46 form a G2 region; it reads DMDQR. The G3 stretch occupies residues 64 to 67; that stretch reads DTPG. The segment at 134-137 is G4; sequence TGGD. The segment at 173 to 175 is G5; that stretch reads NNK. Asn-174 contacts GTP.

The protein belongs to the TRAFAC class TrmE-Era-EngA-EngB-Septin-like GTPase superfamily. AIG1/Toc34/Toc159-like paraseptin GTPase family. IAN subfamily. In terms of tissue distribution, mostly expressed in pollen.

This Arabidopsis thaliana (Mouse-ear cress) protein is Immune-associated nucleotide-binding protein 1.